Here is a 260-residue protein sequence, read N- to C-terminus: MKLKNIHLYNYVVIYTKNCEIYINKGNEQVYIPPRMVAIFEKNISFNIETIRKGDGVLYESFDMKHELLTSLRRVIEPSVKFAAESYTNKRSFKERIFKVKSCSIVIDLFKRLKDNGSPEFTAIYELAFLVSKCENPSMFAISLFSSVAVTFSERIVTLLFSDLTRKWKLSDIAEEMHISEISVRKRLEQECLNFNQLILDVRMNQAAKFIIRSDHQIGMIASLVGYTSVSYFIKTFKEYYGVTPKKFEIGIKENLRCNR.

One can recognise an HTH araC/xylS-type domain in the interval 154–251 (ERIVTLLFSD…GVTPKKFEIG (98 aa)). 2 DNA-binding regions (H-T-H motif) span residues 171-192 (SDIA…EQEC) and 218-241 (IGMI…KEYY).

As to quaternary structure, homodimer.

In terms of biological role, positive regulator of the expression of the 987P operon for the fimbrial protein in enterotoxigenic E.coli. The protein is HTH-type transcriptional activator FapR of Escherichia coli.